The chain runs to 923 residues: Periodic tryptophan protein 2 (923 aa).

5 WD repeats span residues 12–52 (GTVY…TFEY), 53–93 (EHRK…LHHF), 94–132 (NFKE…KDRQ), 144–183 (GHFQ…KNLA), and 189–228 (GHRD…SDDD). 2 positions are modified to phosphoserine: serine 225 and serine 232. WD repeat units lie at residues 258-297 (ANQA…LIQQ), 300-340 (MGQN…YILK), 343-382 (GHFD…CLAT), 385-424 (EHTS…NFRT), 428-470 (TERI…DALS), 471-510 (GHEG…QQVE), 513-552 (EVYS…QVGN), and 575-614 (ERSK…LLKR). Phosphoserine occurs at positions 651 and 664. The disordered stretch occupies residues 653-674 (LEDRIDNSLPGSQRGGDLSTRK). The WD 14 repeat unit spans residues 676–714 (RPEVRVTSVQFSPTANAFAAASTEGLLIYSTNDTILFDP). Composition is skewed to acidic residues over residues 869–893 (KDDA…DEEG) and 911–923 (DSSD…KELP). Residues 869–923 (KDDADEDNEENEENDVVMESDDEEGWIGFNGKDNKLPLSNENDSSDEEENEKELP) form a disordered region. 2 positions are modified to phosphoserine: serine 912 and serine 913.

It belongs to the WD repeat PWP2 family. As to quaternary structure, interacts with snoRNA U3. Interacts with MPP10. Component of the ribosomal small subunit (SSU) processome composed of at least 40 protein subunits and snoRNA U3.

The protein resides in the nucleus. The protein localises to the nucleolus. In terms of biological role, required for bud-site selection and cell separation. Also involved in nucleolar processing of pre-18S ribosomal RNA. The sequence is that of Periodic tryptophan protein 2 (PWP2) from Saccharomyces cerevisiae (strain ATCC 204508 / S288c) (Baker's yeast).